Here is a 63-residue protein sequence, read N- to C-terminus: Conotoxin Gm5.1 (63 aa).

A signal peptide spans Met1–Thr21. Positions Val22 to Arg50 are excised as a propeptide.

The protein belongs to the conotoxin T superfamily. Contains 2 disulfide bonds that can be either 'C1-C3, C2-C4' or 'C1-C4, C2-C3', since these disulfide connectivities have been observed for conotoxins with cysteine framework V (for examples, see AC P0DQQ7 and AC P81755). As to expression, expressed by the venom duct.

Its subcellular location is the secreted. The polypeptide is Conotoxin Gm5.1 (Conus gloriamaris (Glory-of-the-Sea cone)).